The following is a 1279-amino-acid chain: ATP-dependent helicase/nuclease subunit A (1279 aa).

The region spanning 4–499 (TKWTDEQRQA…VKLFKNFRSR (496 aa)) is the UvrD-like helicase ATP-binding domain. 25 to 32 (AGAGAGKT) serves as a coordination point for ATP. In terms of domain architecture, UvrD-like helicase C-terminal spans 526 to 853 (EEALKVGASY…RIMSIHKSKG (328 aa)).

Belongs to the helicase family. AddA subfamily. In terms of assembly, heterodimer of AddA and AddB/RexB. Mg(2+) serves as cofactor.

It carries out the reaction Couples ATP hydrolysis with the unwinding of duplex DNA by translocating in the 3'-5' direction.. The catalysed reaction is ATP + H2O = ADP + phosphate + H(+). The heterodimer acts as both an ATP-dependent DNA helicase and an ATP-dependent, dual-direction single-stranded exonuclease. Recognizes the chi site generating a DNA molecule suitable for the initiation of homologous recombination. The AddA nuclease domain is required for chi fragment generation; this subunit has the helicase and 3' -&gt; 5' nuclease activities. The chain is ATP-dependent helicase/nuclease subunit A from Clostridium botulinum (strain Langeland / NCTC 10281 / Type F).